Consider the following 428-residue polypeptide: Cytochrome c biogenesis protein CcsB (428 aa).

3 helical membrane passes run 14–34 (LRFAISLIIFIAITSGIGTFI), 72–92 (SIWFLFTLILLCISLSACSFR), and 162–182 (IGPLVVHIGLIVLLLGSAYGS).

The protein belongs to the Ccs1/CcsB family. As to quaternary structure, may interact with CcsA.

It localises to the cellular thylakoid membrane. Required during biogenesis of c-type cytochromes (cytochrome c6 and cytochrome f) at the step of heme attachment. This chain is Cytochrome c biogenesis protein CcsB, found in Prochlorococcus marinus (strain MIT 9312).